A 333-amino-acid chain; its full sequence is Glycerol-3-phosphate dehydrogenase [NAD(P)+] (333 aa).

Positions 11, 34, and 107 each coordinate NADPH. The sn-glycerol 3-phosphate site is built by lysine 107, glycine 136, and serine 138. Alanine 140 serves as a coordination point for NADPH. Sn-glycerol 3-phosphate-binding residues include lysine 191, aspartate 244, serine 254, arginine 255, and asparagine 256. The active-site Proton acceptor is lysine 191. An NADPH-binding site is contributed by arginine 255. NADPH-binding residues include isoleucine 279 and glutamate 281.

It belongs to the NAD-dependent glycerol-3-phosphate dehydrogenase family.

The protein resides in the cytoplasm. The enzyme catalyses sn-glycerol 3-phosphate + NAD(+) = dihydroxyacetone phosphate + NADH + H(+). It catalyses the reaction sn-glycerol 3-phosphate + NADP(+) = dihydroxyacetone phosphate + NADPH + H(+). It participates in membrane lipid metabolism; glycerophospholipid metabolism. Its function is as follows. Catalyzes the reduction of the glycolytic intermediate dihydroxyacetone phosphate (DHAP) to sn-glycerol 3-phosphate (G3P), the key precursor for phospholipid synthesis. The polypeptide is Glycerol-3-phosphate dehydrogenase [NAD(P)+] (Nitrosospira multiformis (strain ATCC 25196 / NCIMB 11849 / C 71)).